A 438-amino-acid polypeptide reads, in one-letter code: Cyclic 2,3-diphosphoglycerate synthetase (438 aa).

This sequence belongs to the cyclic 2,3-diphosphoglycerate synthetase family.

The protein resides in the cytoplasm. The catalysed reaction is (2R)-2,3-bisphosphoglycerate + ATP + H(+) = cyclic (2R)-2,3-bisphosphoglycerate + ADP + phosphate. Catalyzes the formation of cyclic 2,3-diphosphoglycerate (cDPG) by formation of an intramolecular phosphoanhydride bond at the expense of ATP. This Thermococcus gammatolerans (strain DSM 15229 / JCM 11827 / EJ3) protein is Cyclic 2,3-diphosphoglycerate synthetase.